Here is an 855-residue protein sequence, read N- to C-terminus: MEPHSQEPDLKPIYHRLLSPLSLFPSKAKPPPEPPKRPSQDATPLQSIPLAKLKVGPLCRQVSKRLASSGRAARVTAKDRLRLTEVILEELKCNWREPPIEPILDYENNQKLRQRLESYVLISSEQLFVRYLHLLVTLPTSRRVFTESATLSRLAVNLARDCTVFLTSPDVYRCLLADFQTLLNLKHAQGGIVKLRPPPCPPGTFKLCPIPWPHSTGLDHMPCSSLNLNYLVQLSRPYDFPSEPEPDPVEELKSIPQLKSRQQLLWVPSMIKDKEIESRPSPMVPLPSHSPSSESHQFPTSPVHSWLQRGQSMPCLHEGWSLADELCLLPPSPHPLTPLILASESKPLPFRDIVAEDLKQKMKIMRMEWSRYSLLDSGLPPLLGVLTRRLTAQHHLEKLQQMIKSLQEEEASGKWDLQPPRIIPLHPQPVTVALKVHDQVIVQVATVQLSERYFNDSFHVEGAGVLYNHLTGELDGKAIEEMDADRLVGNTTGEVYKELMSRVSVSHLSFEEGDQIEPSADKDWSSYLASSFLHQDKHMPIINRNLVGFYSRRTSTPKPVPEKVPSLTLLPRHKSWDKRPNRHGVWMNWLKPSVSSEDYFKYLSFQESDFLHVIFQMYEKEAPVEVPVPVQEYLDIQQPPPLLQDEELEFMQGKWDWSSVIEDGSGPGRAYIHNLQQRLKRLWVMLEVPEQNRLDMVIKYSSNARLQQLPALIKAWEQVLKPIQKRESLLGRLEWFEQQASDPNRFFQKPDLLMNRLLEENRFRSYLQRKLNRMESNLVSLLERIESVFGEPVTFKGRSYLKKMKQDKVEMLYWLQQQRRIRNLTQAQKTFRQSCTFTGSSSQALVAPGNTPTTH.

2 disordered regions span residues 23 to 43 (LFPS…QDAT) and 278 to 302 (SRPS…PTSP). Residues 287-296 (PSHSPSSESH) show a composition bias toward low complexity. Coiled coils occupy residues 387 to 413 (TRRL…EASG) and 764 to 789 (RSYL…ESVF).

Belongs to the CCDC87 family. In terms of tissue distribution, specifically expressed in testis (at protein level). Not detected in other tissues tested (at protein level). In the testis, localizes to pachytene spermatocytes and spermatids.

Functionally, plays a role in spermatogenesis, where it is important for normal sperm head morphology. Also required for the acrosome reaction and thus normal male fertility. The sequence is that of Coiled-coil domain-containing protein 87 (Ccdc87) from Mus musculus (Mouse).